The chain runs to 347 residues: Ubiquitin thioesterase Otu1 (347 aa).

The Ubiquitin-like domain maps to 5-87 (FSVKLKSKKG…LIVEEKAAPA (83 aa)). Residues 8 to 89 (KLKSKKGQFI…VEEKAAPAPA (82 aa)) form a UBX-like region. The region spanning 150–274 (LLKKVVPADN…GIHYDPLYME (125 aa)) is the OTU domain. Positions 155 to 161 (VPADNSC) are cys-loop. Asp-158 is a catalytic residue. Cys-161 functions as the Nucleophile in the catalytic mechanism. Residues 213–223 (IQKADSWGGAI) are variable-loop. Positions 263–267 (FDGIH) are his-loop. Ile-266 is a substrate binding site. Residue His-267 is part of the active site. Residues 290–295 (LGVYQQ) are S2 site. The C2H2-type zinc-finger motif lies at 317–341 (LRCMQCDVRLVGQVQAQEHAKQTGH). His-341 is a catalytic residue.

The enzyme catalyses Thiol-dependent hydrolysis of ester, thioester, amide, peptide and isopeptide bonds formed by the C-terminal Gly of ubiquitin (a 76-residue protein attached to proteins as an intracellular targeting signal).. Hydrolase that can remove conjugated ubiquitin from proteins and may therefore play an important regulatory role at the level of protein turnover by preventing degradation. Involved in the regulation of DNA damage repair. The protein is Ubiquitin thioesterase Otu1 of Drosophila melanogaster (Fruit fly).